We begin with the raw amino-acid sequence, 160 residues long: Serine-protein kinase RsbW (160 aa).

The protein belongs to the anti-sigma-factor family.

It catalyses the reaction L-seryl-[protein] + ATP = O-phospho-L-seryl-[protein] + ADP + H(+). It carries out the reaction L-threonyl-[protein] + ATP = O-phospho-L-threonyl-[protein] + ADP + H(+). Negative regulator of sigma-B activity. Phosphorylates and inactivates its specific antagonist protein, RsbV. Upon phosphorylation of RsbV, RsbW is released and binds to sigma-B, thereby blocking its ability to form an RNA polymerase holoenzyme (E-sigma-B). This is Serine-protein kinase RsbW from Bacillus mycoides (strain KBAB4) (Bacillus weihenstephanensis).